Here is a 549-residue protein sequence, read N- to C-terminus: uncharacterized protein (549 aa).

This is an uncharacterized protein from Acanthamoeba polyphaga (Amoeba).